A 352-amino-acid polypeptide reads, in one-letter code: Protein-glutamate methylesterase/protein-glutamine glutaminase 2 (352 aa).

In terms of domain architecture, Response regulatory spans 6-124; it reads KVLIVEDSLV…NAGYDTMAAK (119 aa). D57 carries the post-translational modification 4-aspartylphosphate. Positions 162–343 constitute a CheB-type methylesterase domain; that stretch reads PGTYSMVGIV…LPLPAIAARL (182 aa). Active-site residues include S173, H200, and D292.

It belongs to the CheB family. Phosphorylated by CheA. Phosphorylation of the N-terminal regulatory domain activates the methylesterase activity.

The protein localises to the cytoplasm. The catalysed reaction is [protein]-L-glutamate 5-O-methyl ester + H2O = L-glutamyl-[protein] + methanol + H(+). It carries out the reaction L-glutaminyl-[protein] + H2O = L-glutamyl-[protein] + NH4(+). Involved in chemotaxis. Part of a chemotaxis signal transduction system that modulates chemotaxis in response to various stimuli. Catalyzes the demethylation of specific methylglutamate residues introduced into the chemoreceptors (methyl-accepting chemotaxis proteins or MCP) by CheR. Also mediates the irreversible deamidation of specific glutamine residues to glutamic acid. The protein is Protein-glutamate methylesterase/protein-glutamine glutaminase 2 of Paramagnetospirillum magneticum (strain ATCC 700264 / AMB-1) (Magnetospirillum magneticum).